The chain runs to 440 residues: tRNA(Ile)-lysidine synthase (440 aa).

ATP is bound at residue 31–36; the sequence is SGGADS.

This sequence belongs to the tRNA(Ile)-lysidine synthase family.

The protein resides in the cytoplasm. The enzyme catalyses cytidine(34) in tRNA(Ile2) + L-lysine + ATP = lysidine(34) in tRNA(Ile2) + AMP + diphosphate + H(+). Functionally, ligates lysine onto the cytidine present at position 34 of the AUA codon-specific tRNA(Ile) that contains the anticodon CAU, in an ATP-dependent manner. Cytidine is converted to lysidine, thus changing the amino acid specificity of the tRNA from methionine to isoleucine. The sequence is that of tRNA(Ile)-lysidine synthase from Borreliella afzelii (strain PKo) (Borrelia afzelii).